We begin with the raw amino-acid sequence, 262 residues long: MLFAVIGHPIEHSLSPLLHKISFELMKVEAEYVKVDVPPHRLGDFMSSVDMIFNGINVTIPHKVEVLKYVDVADDLVNEVGAANTLKIKDGKIYAFNTDVEGVRGSIKDAVDPKGLKVAVLGAGGAARAAVVALRDEAQVTVFNRTLEKAKRLAEELGVDYAGLNEVDKIKKHDIIINATPVGMDGVSMPIPPDVIESRHVLMDMVYRPLYTPFLKVGLAKGAKTVNGLKMLVIQGMESEKVWLGASPYWRDVYERLLASLA.

Residues 13–15 and Thr-59 each bind shikimate; that span reads SLS. The active-site Proton acceptor is the Lys-63. Asp-75 lines the NADP(+) pocket. Residues Asn-84 and Asp-99 each contribute to the shikimate site. NADP(+) contacts are provided by residues 122–126, 144–149, and Met-205; these read GAGGA and NRTLEK. Tyr-207 is a shikimate binding site. Gly-228 contacts NADP(+).

Belongs to the shikimate dehydrogenase family. As to quaternary structure, homodimer.

It catalyses the reaction shikimate + NADP(+) = 3-dehydroshikimate + NADPH + H(+). It participates in metabolic intermediate biosynthesis; chorismate biosynthesis; chorismate from D-erythrose 4-phosphate and phosphoenolpyruvate: step 4/7. In terms of biological role, involved in the biosynthesis of the chorismate, which leads to the biosynthesis of aromatic amino acids. Catalyzes the reversible NADPH linked reduction of 3-dehydroshikimate (DHSA) to yield shikimate (SA). This Ignicoccus hospitalis (strain KIN4/I / DSM 18386 / JCM 14125) protein is Shikimate dehydrogenase (NADP(+)).